Consider the following 271-residue polypeptide: Small ribosomal subunit protein uS2 (271 aa).

The tract at residues 235–271 (FDAKNPLKPQNYNAPNKRPYQDSPRKPSYQNQNQNQI) is disordered. The span at 262–271 (SYQNQNQNQI) shows a compositional bias: polar residues.

It belongs to the universal ribosomal protein uS2 family.

This is Small ribosomal subunit protein uS2 from Onion yellows phytoplasma (strain OY-M).